A 517-amino-acid chain; its full sequence is Protein disulfide-isomerase A5 (517 aa).

Residues methionine 1–serine 21 form the signal peptide. Intrachain disulfides connect cysteine 83–cysteine 92, cysteine 180–cysteine 183, cysteine 303–cysteine 306, and cysteine 424–cysteine 427. Thioredoxin domains are found at residues phenylalanine 132–proline 259, proline 268–alanine 382, and tryptophan 376–glutamate 504. The short motif at arginine 514–leucine 517 is the Prevents secretion from ER element.

It belongs to the protein disulfide isomerase family. In terms of assembly, interacts with CALR (via P-domain).

The protein resides in the endoplasmic reticulum lumen. It catalyses the reaction Catalyzes the rearrangement of -S-S- bonds in proteins.. The polypeptide is Protein disulfide-isomerase A5 (Pdia5) (Mus musculus (Mouse)).